A 330-amino-acid chain; its full sequence is Ketol-acid reductoisomerase (NADP(+)) (330 aa).

One can recognise a KARI N-terminal Rossmann domain in the interval 1 to 181; that stretch reads MNVYYEQDAD…GGAKAGVIET (181 aa). Residues 24–27, Arg-47, Ser-50, Ser-52, and 82–85 contribute to the NADP(+) site; these read YGSQ and DQYQ. The active site involves His-107. Residue Gly-133 participates in NADP(+) binding. Residues 182–327 form the KARI C-terminal knotted domain; that stretch reads TIKDETETDL…AKLRNMMSWL (146 aa). Mg(2+) is bound by residues Asp-190, Glu-194, Glu-226, and Glu-230. A substrate-binding site is contributed by Ser-251.

Belongs to the ketol-acid reductoisomerase family. Requires Mg(2+) as cofactor.

It catalyses the reaction (2R)-2,3-dihydroxy-3-methylbutanoate + NADP(+) = (2S)-2-acetolactate + NADPH + H(+). The enzyme catalyses (2R,3R)-2,3-dihydroxy-3-methylpentanoate + NADP(+) = (S)-2-ethyl-2-hydroxy-3-oxobutanoate + NADPH + H(+). The protein operates within amino-acid biosynthesis; L-isoleucine biosynthesis; L-isoleucine from 2-oxobutanoate: step 2/4. It participates in amino-acid biosynthesis; L-valine biosynthesis; L-valine from pyruvate: step 2/4. Its function is as follows. Involved in the biosynthesis of branched-chain amino acids (BCAA). Catalyzes an alkyl-migration followed by a ketol-acid reduction of (S)-2-acetolactate (S2AL) to yield (R)-2,3-dihydroxy-isovalerate. In the isomerase reaction, S2AL is rearranged via a Mg-dependent methyl migration to produce 3-hydroxy-3-methyl-2-ketobutyrate (HMKB). In the reductase reaction, this 2-ketoacid undergoes a metal-dependent reduction by NADPH to yield (R)-2,3-dihydroxy-isovalerate. In Prosthecochloris aestuarii (strain DSM 271 / SK 413), this protein is Ketol-acid reductoisomerase (NADP(+)).